The chain runs to 219 residues: Ion-translocating oxidoreductase complex subunit G (219 aa).

A helical membrane pass occupies residues 25–45 (GLLLGLFSLVSALMLALASDA). Threonine 187 carries the FMN phosphoryl threonine modification.

This sequence belongs to the RnfG family. In terms of assembly, the complex is composed of six subunits: RnfA, RnfB, RnfC, RnfD, RnfE and RnfG. It depends on FMN as a cofactor.

It localises to the cellular chromatophore membrane. In terms of biological role, part of a membrane-bound complex that couples electron transfer with translocation of ions across the membrane. In Cereibacter sphaeroides (strain ATCC 17023 / DSM 158 / JCM 6121 / CCUG 31486 / LMG 2827 / NBRC 12203 / NCIMB 8253 / ATH 2.4.1.) (Rhodobacter sphaeroides), this protein is Ion-translocating oxidoreductase complex subunit G.